Here is a 134-residue protein sequence, read N- to C-terminus: MAPRLLFCLVLCFLRAEPTNAGVIQTPRHKVTGKGQEATLWCEPISGHSAVFWYRQTIVQGLEFLTYFRNQAPIDDSGMPKERFSAQMPNQSHSTLKIQSTQPQDSAVYLCASSLSTGVSYEQYFGPGTRLTVL.

The N-terminal stretch at 1–19 (MAPRLLFCLVLCFLRAEPT) is a signal peptide. Positions 20-115 (NAGVIQTPRH…SAVYLCASSL (96 aa)) are v segment. Cysteines 42 and 111 form a disulfide. N-linked (GlcNAc...) asparagine glycosylation occurs at Asn90. The segment at 116-119 (STGV) is d segment. Residues 120–134 (SYEQYFGPGTRLTVL) are j segment.

The polypeptide is T-cell receptor beta chain V region CTL-F3 (Mus musculus (Mouse)).